A 155-amino-acid chain; its full sequence is 3-hydroxyacyl-[acyl-carrier-protein] dehydratase FabZ (155 aa).

Histidine 57 is a catalytic residue.

The protein belongs to the thioester dehydratase family. FabZ subfamily.

It localises to the cytoplasm. The enzyme catalyses a (3R)-hydroxyacyl-[ACP] = a (2E)-enoyl-[ACP] + H2O. Its function is as follows. Involved in unsaturated fatty acids biosynthesis. Catalyzes the dehydration of short chain beta-hydroxyacyl-ACPs and long chain saturated and unsaturated beta-hydroxyacyl-ACPs. The sequence is that of 3-hydroxyacyl-[acyl-carrier-protein] dehydratase FabZ from Cereibacter sphaeroides (strain ATCC 17025 / ATH 2.4.3) (Rhodobacter sphaeroides).